A 140-amino-acid polypeptide reads, in one-letter code: 3-hydroxyacyl-[acyl-carrier-protein] dehydratase FabZ (140 aa).

Residue histidine 46 is part of the active site.

This sequence belongs to the thioester dehydratase family. FabZ subfamily.

It localises to the cytoplasm. The catalysed reaction is a (3R)-hydroxyacyl-[ACP] = a (2E)-enoyl-[ACP] + H2O. Involved in unsaturated fatty acids biosynthesis. Catalyzes the dehydration of short chain beta-hydroxyacyl-ACPs and long chain saturated and unsaturated beta-hydroxyacyl-ACPs. The sequence is that of 3-hydroxyacyl-[acyl-carrier-protein] dehydratase FabZ from Pseudothermotoga lettingae (strain ATCC BAA-301 / DSM 14385 / NBRC 107922 / TMO) (Thermotoga lettingae).